The chain runs to 483 residues: Phosphomethylpyrimidine synthase (483 aa).

Residues Asn-97, Met-126, Tyr-156, His-192, Ser-212–Gly-214, Asp-253–Arg-256, and Glu-292 contribute to the substrate site. Position 296 (His-296) interacts with Zn(2+). Substrate is bound at residue Tyr-319. Residue His-360 participates in Zn(2+) binding. The [4Fe-4S] cluster site is built by Cys-440, Cys-443, and Cys-448.

The protein belongs to the ThiC family. The cofactor is [4Fe-4S] cluster.

It catalyses the reaction 5-amino-1-(5-phospho-beta-D-ribosyl)imidazole + S-adenosyl-L-methionine = 4-amino-2-methyl-5-(phosphooxymethyl)pyrimidine + CO + 5'-deoxyadenosine + formate + L-methionine + 3 H(+). The protein operates within cofactor biosynthesis; thiamine diphosphate biosynthesis. Its function is as follows. Catalyzes the synthesis of the hydroxymethylpyrimidine phosphate (HMP-P) moiety of thiamine from aminoimidazole ribotide (AIR) in a radical S-adenosyl-L-methionine (SAM)-dependent reaction. This is Phosphomethylpyrimidine synthase from Parasynechococcus marenigrum (strain WH8102).